A 205-amino-acid chain; its full sequence is Cytochrome c biogenesis ATP-binding export protein CcmA 1 (205 aa).

Residues Leu2 to Leu205 enclose the ABC transporter domain. Gly34–Thr41 provides a ligand contact to ATP.

It belongs to the ABC transporter superfamily. CcmA exporter (TC 3.A.1.107) family. The complex is composed of two ATP-binding proteins (CcmA) and two transmembrane proteins (CcmB).

It is found in the cell inner membrane. It carries out the reaction heme b(in) + ATP + H2O = heme b(out) + ADP + phosphate + H(+). Part of the ABC transporter complex CcmAB involved in the biogenesis of c-type cytochromes; once thought to export heme, this seems not to be the case, but its exact role is uncertain. Responsible for energy coupling to the transport system. This chain is Cytochrome c biogenesis ATP-binding export protein CcmA 1, found in Salmonella paratyphi A (strain ATCC 9150 / SARB42).